A 358-amino-acid polypeptide reads, in one-letter code: Uroporphyrinogen decarboxylase (358 aa).

Substrate is bound by residues 29–33, phenylalanine 48, aspartate 79, tyrosine 155, serine 210, and histidine 330; that span reads RQAGR.

The protein belongs to the uroporphyrinogen decarboxylase family. As to quaternary structure, homodimer.

Its subcellular location is the cytoplasm. The enzyme catalyses uroporphyrinogen III + 4 H(+) = coproporphyrinogen III + 4 CO2. It participates in porphyrin-containing compound metabolism; protoporphyrin-IX biosynthesis; coproporphyrinogen-III from 5-aminolevulinate: step 4/4. Its function is as follows. Catalyzes the decarboxylation of four acetate groups of uroporphyrinogen-III to yield coproporphyrinogen-III. This is Uroporphyrinogen decarboxylase from Bordetella bronchiseptica (strain ATCC BAA-588 / NCTC 13252 / RB50) (Alcaligenes bronchisepticus).